Here is a 202-residue protein sequence, read N- to C-terminus: Large ribosomal subunit protein uL18 (202 aa).

This sequence belongs to the universal ribosomal protein uL18 family. As to quaternary structure, part of the 50S ribosomal subunit. Contacts the 5S and 23S rRNAs.

Its function is as follows. This is one of the proteins that bind and probably mediate the attachment of the 5S RNA into the large ribosomal subunit, where it forms part of the central protuberance. The protein is Large ribosomal subunit protein uL18 of Methanopyrus kandleri (strain AV19 / DSM 6324 / JCM 9639 / NBRC 100938).